Consider the following 461-residue polypeptide: Photosystem II CP43 reaction center protein (461 aa).

A propeptide spanning residues 1–2 (ME) is cleaved from the precursor. Thr3 carries the post-translational modification N-acetylthreonine. At Thr3 the chain carries Phosphothreonine. The next 5 membrane-spanning stretches (helical) occupy residues 57 to 81 (LFEV…PHIA), 122 to 143 (LIGP…KDKN), 166 to 188 (KAMY…RVIT), 243 to 263 (TPWP…LSYS), and 279 to 300 (WFNN…ASQS). Residue Glu355 coordinates [CaMn4O5] cluster. Residues 435 to 459 (RARAAAAGFEKGIDRFDEPVLSMRP) traverse the membrane as a helical segment.

The protein belongs to the PsbB/PsbC family. PsbC subfamily. In terms of assembly, PSII is composed of 1 copy each of membrane proteins PsbA, PsbB, PsbC, PsbD, PsbE, PsbF, PsbH, PsbI, PsbJ, PsbK, PsbL, PsbM, PsbT, PsbX, PsbY, PsbZ, Psb30/Ycf12, at least 3 peripheral proteins of the oxygen-evolving complex and a large number of cofactors. It forms dimeric complexes. Binds multiple chlorophylls and provides some of the ligands for the Ca-4Mn-5O cluster of the oxygen-evolving complex. It may also provide a ligand for a Cl- that is required for oxygen evolution. PSII binds additional chlorophylls, carotenoids and specific lipids. is required as a cofactor. In terms of processing, phosphorylated in vitro.

Its subcellular location is the plastid. The protein resides in the chloroplast thylakoid membrane. In terms of biological role, one of the components of the core complex of photosystem II (PSII). It binds chlorophyll and helps catalyze the primary light-induced photochemical processes of PSII. PSII is a light-driven water:plastoquinone oxidoreductase, using light energy to abstract electrons from H(2)O, generating O(2) and a proton gradient subsequently used for ATP formation. The chain is Photosystem II CP43 reaction center protein from Chlamydomonas reinhardtii (Chlamydomonas smithii).